Consider the following 208-residue polypeptide: Small ribosomal subunit protein uS4 (208 aa).

The 64-residue stretch at Leu98–Leu161 folds into the S4 RNA-binding domain.

The protein belongs to the universal ribosomal protein uS4 family. In terms of assembly, part of the 30S ribosomal subunit. Contacts protein S5. The interaction surface between S4 and S5 is involved in control of translational fidelity.

In terms of biological role, one of the primary rRNA binding proteins, it binds directly to 16S rRNA where it nucleates assembly of the body of the 30S subunit. With S5 and S12 plays an important role in translational accuracy. This is Small ribosomal subunit protein uS4 from Anaeromyxobacter sp. (strain Fw109-5).